We begin with the raw amino-acid sequence, 420 residues long: D-tagatose-1,6-bisphosphate aldolase subunit GatZ (420 aa).

Belongs to the GatZ/KbaZ family. GatZ subfamily. As to quaternary structure, forms a complex with GatY.

Its pathway is carbohydrate metabolism; D-tagatose 6-phosphate degradation; D-glyceraldehyde 3-phosphate and glycerone phosphate from D-tagatose 6-phosphate: step 2/2. Component of the tagatose-1,6-bisphosphate aldolase GatYZ that is required for full activity and stability of the Y subunit. Could have a chaperone-like function for the proper and stable folding of GatY. When expressed alone, GatZ does not show any aldolase activity. Is involved in the catabolism of galactitol. This Escherichia coli (strain SMS-3-5 / SECEC) protein is D-tagatose-1,6-bisphosphate aldolase subunit GatZ.